A 533-amino-acid chain; its full sequence is Death domain-containing ATP nucleosidase (533 aa).

The interval 1–262 is death domain; the sequence is MDAAAIISLL…TAAGKEEKVS (262 aa). The disordered stretch occupies residues 184 to 248; sequence STFVSDDATQ…TQTSTNSFNS (65 aa). Over residues 218 to 227 the composition is skewed to polar residues; that stretch reads PSAQVNQPPT. A compositionally biased stretch (low complexity) spans 236 to 248; sequence SGSTQTSTNSFNS. Residues 263 to 533 form a purine nucleoside phosphorylase domain region; sequence DDVTKGIKFL…HLDDDRTIHM (271 aa).

The enzyme catalyses ATP + H2O = D-ribose 5-triphosphate + adenine. It carries out the reaction dATP + H2O = 2-deoxyribose 5-triphosphate + adenine. In terms of biological role, the C-terminal purine nucleoside phosphorylase (PNP) domain cleaves the N-glycosidic bond of ATP, and to a lesser extent dATP, to release adenine and a sugar triphosphate; has weak activity on ADP and AMP and no activity on dADP, dAMP, adenosine, deoxyadenosine or other (d)NTPs. This chain is Death domain-containing ATP nucleosidase (109585858), found in Amphimedon queenslandica (Sponge).